A 737-amino-acid polypeptide reads, in one-letter code: ARMADILLO BTB ARABIDOPSIS PROTEIN 1 (737 aa).

9 ARM repeats span residues 112-154 (DENV…KDCA), 165-212 (PGYQ…NIAH), 215-254 (PRIKTNIRVEGGIAPLVELLNFPDVKVQRAAAGALRTVSF), 257-296 (DENKSQIVELNALPTLVLMLQSQDSTVHGEAIGAIGNLVH), 299-338 (PDIKKEVIRAGALQPVIGLLSSTCLETQREAALLIGQFAA), 341-380 (SDCKVHIAQRGAITPLIKMLESSDEQVVEMSAFALGRLAQ), 382-421 (AHNQAGIAHRGGIISLLNLLDVKTGSVQHNAAFALYGLAD), 456-495 (LKRLQNKIHGPVLNQLLYLMRTAEKTVQIRIALALAHLCD), and 497-536 (KDGKLIFIDNNGVEFLLELLYFSSNKQQRYSSSALYELAK). The 68-residue stretch at 568–635 (SDVTFLIDGK…IYSGRINIAK (68 aa)) folds into the BTB domain.

Forms a heterodimeric complex with TCP24. Interacts with the origin recognition complex (preRC) components ORC1A, ORC1B, CDT1A and CDT1B. Interacts with DUF7/AIP1. As to expression, weakly expressed in the emerging lateral roots and mainly expressed in the shoot apex, young leaves and flower buds.

Its subcellular location is the nucleus. Its pathway is protein modification; protein ubiquitination. In terms of biological role, may act as a substrate-specific adapter of an E3 ubiquitin-protein ligase complex (CUL3-RBX1-BTB) which mediates the ubiquitination and subsequent proteasomal degradation of target proteins. In association with TCP24, exerts a negative role in cell proliferation in leaves, possibly by inhibiting mitotic DNA replication. The sequence is that of ARMADILLO BTB ARABIDOPSIS PROTEIN 1 (ABAP1) from Arabidopsis thaliana (Mouse-ear cress).